The primary structure comprises 597 residues: NADH-quinone oxidoreductase subunit C/D (597 aa).

Residues 1-188 (MKKEIKRDDV…DPYVLNKYKE (188 aa)) are NADH dehydrogenase I subunit C. The tract at residues 211–597 (KYMFLNLGPN…IDFVMSDVDR (387 aa)) is NADH dehydrogenase I subunit D.

In the N-terminal section; belongs to the complex I 30 kDa subunit family. This sequence in the C-terminal section; belongs to the complex I 49 kDa subunit family. As to quaternary structure, NDH-1 is composed of 13 different subunits. Subunits NuoB, CD, E, F, and G constitute the peripheral sector of the complex.

It is found in the cell inner membrane. The catalysed reaction is a quinone + NADH + 5 H(+)(in) = a quinol + NAD(+) + 4 H(+)(out). NDH-1 shuttles electrons from NADH, via FMN and iron-sulfur (Fe-S) centers, to quinones in the respiratory chain. The immediate electron acceptor for the enzyme in this species is believed to be ubiquinone. Couples the redox reaction to proton translocation (for every two electrons transferred, four hydrogen ions are translocated across the cytoplasmic membrane), and thus conserves the redox energy in a proton gradient. This Buchnera aphidicola subsp. Baizongia pistaciae (strain Bp) protein is NADH-quinone oxidoreductase subunit C/D.